Consider the following 65-residue polypeptide: Protein OPG052 (65 aa).

The span at 1–10 (MEGSKRKHDS) shows a compositional bias: basic residues. The interval 1 to 29 (MEGSKRKHDSRRPQQEQEQPRPRTPPSYE) is disordered. Over residues 11–21 (RRPQQEQEQPR) the composition is skewed to basic and acidic residues.

This sequence belongs to the orthopoxvirus OPG052 family.

The protein is Protein OPG052 (OPG052) of Homo sapiens (Human).